The sequence spans 393 residues: S-adenosylmethionine synthase 1 (393 aa).

A Mg(2+)-binding site is contributed by E9. Position 15 (H15) interacts with ATP. E43 provides a ligand contact to K(+). L-methionine contacts are provided by E56 and Q99. ATP is bound by residues 167 to 169 (DGK), 235 to 238 (SGRF), D246, 252 to 253 (RK), A269, K273, and K277. D246 is an L-methionine binding site. K277 serves as a coordination point for L-methionine.

It belongs to the AdoMet synthase family. As to quaternary structure, homotetramer. It depends on Mn(2+) as a cofactor. The cofactor is Mg(2+). Co(2+) serves as cofactor. K(+) is required as a cofactor.

It localises to the cytoplasm. It carries out the reaction L-methionine + ATP + H2O = S-adenosyl-L-methionine + phosphate + diphosphate. It participates in amino-acid biosynthesis; S-adenosyl-L-methionine biosynthesis; S-adenosyl-L-methionine from L-methionine: step 1/1. Catalyzes the formation of S-adenosylmethionine from methionine and ATP. The reaction comprises two steps that are both catalyzed by the same enzyme: formation of S-adenosylmethionine (AdoMet) and triphosphate, and subsequent hydrolysis of the triphosphate. This Solanum tuberosum (Potato) protein is S-adenosylmethionine synthase 1 (METK1).